The primary structure comprises 472 residues: Gamma-glutamylputrescine synthetase PuuA (472 aa).

Residues 35–129 (PNTQYVDVLL…MLLTMVDEDG (95 aa)) enclose the GS beta-grasp domain. Residues 136–472 (PRNVLNRLWQ…TEIEWMLKNA (337 aa)) enclose the GS catalytic domain.

Belongs to the glutamine synthetase family. In terms of assembly, dodecamer. Mg(2+) is required as a cofactor. The cofactor is Mn(2+).

It carries out the reaction putrescine + L-glutamate + ATP = gamma-L-glutamylputrescine + ADP + phosphate + H(+). It participates in amine and polyamine degradation; putrescine degradation; 4-aminobutanoate from putrescine: step 1/4. In terms of biological role, involved in the breakdown of putrescine. Catalyzes the ATP-dependent gamma-glutamylation of putrescine, producing gamma-L-glutamylputrescine. Absolutely essential to utilize putrescine as both nitrogen and carbon sources and to decrease the toxicity of putrescine, which can lead to inhibition of cell growth and protein synthesis. In vitro is also able to use several diamines, and spermidine and spermine, instead of putrescine, but with a much lower activity, and cannot catalyze the gamma-glutamylation of ornithine or GABA. The protein is Gamma-glutamylputrescine synthetase PuuA of Escherichia coli (strain K12).